The primary structure comprises 520 residues: Amine oxidase [flavin-containing] B (520 aa).

Over M1–V489 the chain is Cytoplasmic. Position 52 is an N6-acetyllysine (K52). Position 397 is an S-8alpha-FAD cysteine (C397). The helical; Anchor for type IV membrane protein transmembrane segment at P490–L516 threads the bilayer. The Mitochondrial intermembrane portion of the chain corresponds to L517–I520.

Belongs to the flavin monoamine oxidase family. Monomer, homo- or heterodimer (containing two subunits of similar size). Each subunit contains a covalently bound flavin. Enzymatically active as monomer. Requires FAD as cofactor.

Its subcellular location is the mitochondrion outer membrane. It catalyses the reaction a secondary aliphatic amine + O2 + H2O = a primary amine + an aldehyde + H2O2. It carries out the reaction (R)-adrenaline + O2 + H2O = (R)-3,4-dihydroxymandelaldehyde + methylamine + H2O2. The enzyme catalyses a primary methyl amine + O2 + H2O = an aldehyde + H2O2 + NH4(+). The catalysed reaction is benzylamine + O2 + H2O = benzaldehyde + H2O2 + NH4(+). It catalyses the reaction dopamine + O2 + H2O = 3,4-dihydroxyphenylacetaldehyde + H2O2 + NH4(+). It carries out the reaction tyramine + O2 + H2O = (4-hydroxyphenyl)acetaldehyde + H2O2 + NH4(+). The enzyme catalyses (R)-noradrenaline + O2 + H2O = (R)-3,4-dihydroxymandelaldehyde + H2O2 + NH4(+). The catalysed reaction is 2-phenylethylamine + O2 + H2O = 2-phenylacetaldehyde + H2O2 + NH4(+). It catalyses the reaction N-acetylputrescine + O2 + H2O = 4-acetamidobutanal + H2O2 + NH4(+). Catalyzes the oxidative deamination of primary and some secondary amines such as neurotransmitters, and exogenous amines including the tertiary amine, neurotoxin 1-methyl-4-phenyl-1,2,3,6-tetrahydropyridine (MPTP), with concomitant reduction of oxygen to hydrogen peroxide and participates in the metabolism of neuroactive and vasoactive amines in the central nervous system and peripheral tissues. Preferentially degrades benzylamine and phenylethylamine. The chain is Amine oxidase [flavin-containing] B from Cavia porcellus (Guinea pig).